An 82-amino-acid polypeptide reads, in one-letter code: Small ribosomal subunit protein bS16 (82 aa).

It belongs to the bacterial ribosomal protein bS16 family.

The protein is Small ribosomal subunit protein bS16 of Shewanella sp. (strain MR-4).